Consider the following 556-residue polypeptide: 2-succinyl-5-enolpyruvyl-6-hydroxy-3-cyclohexene-1-carboxylate synthase (556 aa).

This sequence belongs to the TPP enzyme family. MenD subfamily. In terms of assembly, homodimer. Mg(2+) serves as cofactor. The cofactor is Mn(2+). It depends on thiamine diphosphate as a cofactor.

It carries out the reaction isochorismate + 2-oxoglutarate + H(+) = 5-enolpyruvoyl-6-hydroxy-2-succinyl-cyclohex-3-ene-1-carboxylate + CO2. It participates in quinol/quinone metabolism; 1,4-dihydroxy-2-naphthoate biosynthesis; 1,4-dihydroxy-2-naphthoate from chorismate: step 2/7. Its pathway is quinol/quinone metabolism; menaquinone biosynthesis. Functionally, catalyzes the thiamine diphosphate-dependent decarboxylation of 2-oxoglutarate and the subsequent addition of the resulting succinic semialdehyde-thiamine pyrophosphate anion to isochorismate to yield 2-succinyl-5-enolpyruvyl-6-hydroxy-3-cyclohexene-1-carboxylate (SEPHCHC). This is 2-succinyl-5-enolpyruvyl-6-hydroxy-3-cyclohexene-1-carboxylate synthase from Escherichia coli (strain UTI89 / UPEC).